The following is a 312-amino-acid chain: Isethionate sulfite-lyase activating enzyme (312 aa).

The Radical SAM core domain maps to 20–304 (HDGPGIRTIV…GLQKTALDIL (285 aa)). Residues Cys-34, Cys-38, Cys-41, Cys-60, Cys-66, Cys-69, Cys-73, Cys-93, Cys-96, Cys-100, and Cys-104 each contribute to the [4Fe-4S] cluster site. 40–42 (WCS) provides a ligand contact to S-adenosyl-L-methionine. 4Fe-4S ferredoxin-type domains are found at residues 51–83 (AELA…CGDD) and 84–115 (DKPR…YGKK). S-adenosyl-L-methionine contacts are provided by residues Gly-144, 193–195 (DIK), and His-267.

This sequence belongs to the organic radical-activating enzymes family. Monomer. Requires [4Fe-4S] cluster as cofactor.

It catalyses the reaction glycyl-[protein] + reduced [flavodoxin] + S-adenosyl-L-methionine = glycin-2-yl radical-[protein] + semiquinone [flavodoxin] + 5'-deoxyadenosine + L-methionine + H(+). It functions in the pathway organosulfur degradation; alkanesulfonate degradation. Involved in an anaerobic respiration pathway that converts the sulfonate isethionate (2-hydroxyethanesulfonate) to ammonia, acetate and sulfide. Catalyzes activation of the isethionate sulfite-lyase IslA under anaerobic conditions by generation of an organic free radical on a glycine residue, via a homolytic cleavage of S-adenosyl-L-methionine (SAM). The sequence is that of Isethionate sulfite-lyase activating enzyme from Desulfovibrio desulfuricans (strain ATCC 27774 / DSM 6949 / MB).